A 279-amino-acid polypeptide reads, in one-letter code: Probable autolysin LDP (279 aa).

An N-terminal signal peptide occupies residues 1 to 24 (MKKSLTVTVSSVLAFLALNNAAHA). Residues 51–94 (TTYTVVAGDSLYKIALEHHLTLNQLYSYNPGVTPLIFPGDVISL) enclose the LysM domain. A Peptidase C51 domain is found at 158–279 (VPTVPVAHNY…LNPGKYNYIH (122 aa)).

It carries out the reaction Hydrolyzes the link between N-acetylmuramoyl residues and L-amino acid residues in certain cell-wall glycopeptides.. In terms of biological role, has weak lytic activity toward S.aureus cells. This is Probable autolysin LDP from Staphylococcus aureus (strain NCTC 8325 / PS 47).